The sequence spans 495 residues: Glutamate--tRNA ligase (495 aa).

Positions 12–22 (PSPTGHLHIGN) match the 'HIGH' region motif. A 'KMSKS' region motif is present at residues 259-263 (KLSKR). Position 262 (Lys262) interacts with ATP.

The protein belongs to the class-I aminoacyl-tRNA synthetase family. Glutamate--tRNA ligase type 1 subfamily. Monomer.

The protein localises to the cytoplasm. The enzyme catalyses tRNA(Glu) + L-glutamate + ATP = L-glutamyl-tRNA(Glu) + AMP + diphosphate. Catalyzes the attachment of glutamate to tRNA(Glu) in a two-step reaction: glutamate is first activated by ATP to form Glu-AMP and then transferred to the acceptor end of tRNA(Glu). In Latilactobacillus sakei subsp. sakei (strain 23K) (Lactobacillus sakei subsp. sakei), this protein is Glutamate--tRNA ligase.